The following is a 96-amino-acid chain: Prokineticin Bm8-b (96 aa).

A signal peptide spans 1–19 (MKCFAQIVVLLLVIAFSHG). Disulfide bonds link cysteine 32–cysteine 50, cysteine 37–cysteine 78, cysteine 60–cysteine 86, and cysteine 80–cysteine 95.

Belongs to the AVIT (prokineticin) family. In terms of tissue distribution, expressed by the skin glands.

It localises to the secreted. Its function is as follows. Potent agonist for both PKR1/PROKR1 and PKR2/PROKR2, and inducer of a potent and long-lasting hyperalgesia. Also potentiates capsaicin-induced TRPV1 current, when tested on DRG neurons. At subnanomolar concentrations, this protein both induces potent chemotaxis of macrophages and stimulates LPS-induced production of the pro-inflammatory cytokines IL-1 and IL-12. In vivo, potently stimulates the contraction of the guinea-pig gastrointestinal (GI) smooth muscle (nanomolar concentration). The protein is Prokineticin Bm8-b of Bombina maxima (Giant fire-bellied toad).